Consider the following 377-residue polypeptide: Capsule polysaccharide export inner-membrane protein BexC (377 aa).

The next 2 helical transmembrane spans lie at 23-43 (LFGL…GLFA) and 351-371 (IIAT…LIAS).

Belongs to the BexC/CtrB/KpsE family.

Its subcellular location is the cell inner membrane. May form an ATP-driven capsule polysaccharide export apparatus, in association with the BexA, BexB and BexD proteins. The polypeptide is Capsule polysaccharide export inner-membrane protein BexC (bexC) (Haemophilus influenzae).